Reading from the N-terminus, the 319-residue chain is Ninja-family protein Os07g0602900 (319 aa).

3 disordered regions span residues 1-26 (MAAS…EKGG), 69-152 (LPGG…DAMY), and 181-234 (AEAM…LTMR). Over residues 70–79 (PGGGGGGAGG) the composition is skewed to gly residues. Over residues 105–118 (ERWRRREMQSLKRL) the composition is skewed to basic and acidic residues. Positions 185-196 (DTSSSDNASCQN) are enriched in polar residues. The segment covering 225 to 234 (LRTLRSLTMR) has biased composition (low complexity).

It belongs to the Ninja family.

It localises to the nucleus. The protein is Ninja-family protein Os07g0602900 of Oryza sativa subsp. japonica (Rice).